The primary structure comprises 284 residues: Four and a half LIM domains protein 5 (284 aa).

Residues Cys8–Cys32 form a C4-type zinc finger. 4 LIM zinc-binding domains span residues Asn39 to Ser100, Lys101 to Ala160, His161 to Lys220, and Lys221 to Asp283.

Interacts with CREM (via the third LIM domain). Interacts (via second LIM domain) with SPAG8.

It is found in the nucleus. May be involved in the regulation of spermatogenesis. Stimulates CREM transcriptional activity in a phosphorylation-independent manner. This Rattus norvegicus (Rat) protein is Four and a half LIM domains protein 5 (Fhl5).